The primary structure comprises 390 residues: Elongation factor Ts, mitochondrial (390 aa).

The protein belongs to the EF-Ts family.

It localises to the mitochondrion. In terms of biological role, associates with the EF-Tu.GDP complex and induces the exchange of GDP to GTP. It remains bound to the aminoacyl-tRNA.EF-Tu.GTP complex up to the GTP hydrolysis stage on the ribosome. The chain is Elongation factor Ts, mitochondrial from Plasmodium vivax (strain Salvador I).